The chain runs to 189 residues: Holliday junction branch migration complex subunit RuvA (189 aa).

The tract at residues 1–63 (MIYAMYGVLE…DDEISLYGFS (63 aa)) is domain I. The tract at residues 64–135 (DVLKLKLFEK…ELKDSMKEFD (72 aa)) is domain II. A flexible linker region spans residues 135-139 (DVTLT). A domain III region spans residues 140-189 (EKDKKILEAIEALVTLGFSRNQSKKAVTQILKKDDSLDDIIKKALKFLSR).

Belongs to the RuvA family. In terms of assembly, homotetramer. Forms an RuvA(8)-RuvB(12)-Holliday junction (HJ) complex. HJ DNA is sandwiched between 2 RuvA tetramers; dsDNA enters through RuvA and exits via RuvB. An RuvB hexamer assembles on each DNA strand where it exits the tetramer. Each RuvB hexamer is contacted by two RuvA subunits (via domain III) on 2 adjacent RuvB subunits; this complex drives branch migration. In the full resolvosome a probable DNA-RuvA(4)-RuvB(12)-RuvC(2) complex forms which resolves the HJ.

Its subcellular location is the cytoplasm. Functionally, the RuvA-RuvB-RuvC complex processes Holliday junction (HJ) DNA during genetic recombination and DNA repair, while the RuvA-RuvB complex plays an important role in the rescue of blocked DNA replication forks via replication fork reversal (RFR). RuvA specifically binds to HJ cruciform DNA, conferring on it an open structure. The RuvB hexamer acts as an ATP-dependent pump, pulling dsDNA into and through the RuvAB complex. HJ branch migration allows RuvC to scan DNA until it finds its consensus sequence, where it cleaves and resolves the cruciform DNA. The protein is Holliday junction branch migration complex subunit RuvA of Thermosipho melanesiensis (strain DSM 12029 / CIP 104789 / BI429).